Reading from the N-terminus, the 302-residue chain is Methionyl-tRNA formyltransferase (302 aa).

108–111 provides a ligand contact to (6S)-5,6,7,8-tetrahydrofolate; that stretch reads SLLP. Basic and acidic residues predominate over residues 279–288; the sequence is KRPMEPEEFL. Positions 279-302 are disordered; the sequence is KRPMEPEEFLRGFPLPEGSRAHTS.

It belongs to the Fmt family.

The catalysed reaction is L-methionyl-tRNA(fMet) + (6R)-10-formyltetrahydrofolate = N-formyl-L-methionyl-tRNA(fMet) + (6S)-5,6,7,8-tetrahydrofolate + H(+). Functionally, attaches a formyl group to the free amino group of methionyl-tRNA(fMet). The formyl group appears to play a dual role in the initiator identity of N-formylmethionyl-tRNA by promoting its recognition by IF2 and preventing the misappropriation of this tRNA by the elongation apparatus. In Cereibacter sphaeroides (strain ATCC 17023 / DSM 158 / JCM 6121 / CCUG 31486 / LMG 2827 / NBRC 12203 / NCIMB 8253 / ATH 2.4.1.) (Rhodobacter sphaeroides), this protein is Methionyl-tRNA formyltransferase.